Here is a 360-residue protein sequence, read N- to C-terminus: G-protein coupled receptor 15 (360 aa).

The Extracellular segment spans residues 1 to 33 (MDPEETSVYLDYYYATSPNPDIRETHSHVPYTS). Residues 34–54 (VFLPVFYTAVFLTGVLGNLVL) form a helical membrane-spanning segment. Topologically, residues 55–69 (MGALHFKPGSRRLID) are cytoplasmic. The chain crosses the membrane as a helical span at residues 70 to 90 (IFIINLAASDFIFLVTLPLWV). The Extracellular segment spans residues 91-120 (DKEASLGLWRTGSFLCKGSSYMISVNMHCS). The chain crosses the membrane as a helical span at residues 121-141 (VFLLTCMSVDRYLAIVCPVVS). Over 142–149 (RKFRRTDC) the chain is Cytoplasmic. A helical transmembrane segment spans residues 150–170 (AYVVCASIWFISCLLGLPTLL). At 171–192 (SRELTLIDDKPYCAEKKATPLK) the chain is on the extracellular side. Residues 193 to 213 (LIWSLVALIFTFFVPLLSIVT) form a helical membrane-spanning segment. The Cytoplasmic portion of the chain corresponds to 214-239 (CYCCIARKLCAHYQQSGKHNKKLKKS). Residues 240–260 (IKIIFIVVAAFLVSWLPFNTS) form a helical membrane-spanning segment. The Extracellular segment spans residues 261–284 (KLLAIVSGLQQERYFPSAILQLGM). A helical membrane pass occupies residues 285–305 (EVSGPLAFANSCVNPFIYYIF). Residues 306-360 (DSYIRRAIVHCLCPCLKNYDFGSSTETSDSHLTKALSTFIHAEDFTRRRKRSVSL) lie on the Cytoplasmic side of the membrane. At S359 the chain carries Phosphoserine.

Belongs to the G-protein coupled receptor 1 family. In terms of assembly, interacts with adapter YWHAE; this interaction promotes ER-to-Golgi transport of GPR15. In terms of processing, phosphorylation is necessary for YWHAE binding and efficient surface expression. O-glycosylated. Sialylated O-glycans in the N-terminal tail inhibits binding of GPR15LG. Post-translationally, sulfation is required for efficient binding of GPR15LG.

The protein localises to the cell membrane. In terms of biological role, g protein-coupled receptor that plays an important role in immune homeostasis. Acts via its natural ligand GPR15LG, a chemokine-like polypeptide strongly expressed in gastrointestinal tissues. GPR15-GPR15LG signaling axis regulates intestinal homeostasis and inflammation through the migration of immune cells. Controls thereby the specific homing of T-cells, particularly FOXP3+ regulatory T-cells (Tregs), to the large intestine lamina propria. Also required for skin localization of thymus-derived dendritic epidermal T-cells. Plays an important role in mediating cytoprotective function as well as angiogenesis of thrombomodulin. Mechanistically, preferentially signals through the Gi/o pathway to inhibit adenylate cyclase activity and activate a phosphatidylinositol-calcium second messenger system that regulates the release of Ca(2+) ions from intracellular stores. The chain is G-protein coupled receptor 15 (GPR15) from Macaca nemestrina (Pig-tailed macaque).